A 596-amino-acid polypeptide reads, in one-letter code: Meiosis-specific protein ASY1 (596 aa).

An HORMA domain is found at Q15–V228. A disordered region spans residues C235–Q303. A compositionally biased stretch (acidic residues) spans Q282–T295. The 99-residue stretch at S351–R449 folds into the SWIRM domain. The tract at residues T562–N596 is disordered.

Interacts with ASY3.

It localises to the chromosome. The protein localises to the nucleus. Its function is as follows. Required for normal meiosis in male and female gametophytes. Plays a crucial role in coordinating the activity of DMC1, a key member of the homologous recombination machinery. Acts at the interface between the developing chromosome axes and the recombination machinery to ensure DMC1-mediated interhomolog recombination. In Arabidopsis thaliana (Mouse-ear cress), this protein is Meiosis-specific protein ASY1.